Reading from the N-terminus, the 361-residue chain is Methylthioribose-1-phosphate isomerase (361 aa).

D245 functions as the Proton donor in the catalytic mechanism.

This sequence belongs to the eIF-2B alpha/beta/delta subunits family. MtnA subfamily.

Its subcellular location is the cytoplasm. The protein localises to the nucleus. The catalysed reaction is 5-(methylsulfanyl)-alpha-D-ribose 1-phosphate = 5-(methylsulfanyl)-D-ribulose 1-phosphate. Its pathway is amino-acid biosynthesis; L-methionine biosynthesis via salvage pathway; L-methionine from S-methyl-5-thio-alpha-D-ribose 1-phosphate: step 1/6. Functionally, catalyzes the interconversion of methylthioribose-1-phosphate (MTR-1-P) into methylthioribulose-1-phosphate (MTRu-1-P). The sequence is that of Methylthioribose-1-phosphate isomerase from Monosiga brevicollis (Choanoflagellate).